The sequence spans 238 residues: Laccase-S (238 aa).

Plastocyanin-like domains lie at 4–87 and 100–238; these read NVIA…YDPA and HTII…IARY. A glycan (N-linked (GlcNAc...) asparagine) is linked at N8. Cu cation-binding residues include H21, H23, H66, and H68. A disulfide bridge links C74 with C162. N165 is a glycosylation site (N-linked (GlcNAc...) asparagine).

It belongs to the multicopper oxidase family. In terms of assembly, monomer. It depends on Cu cation as a cofactor.

It is found in the secreted. It catalyses the reaction 4 hydroquinone + O2 = 4 benzosemiquinone + 2 H2O. With respect to regulation, activity is strongly promoted by toluene. Activity is promoted by magnesium, potassium, cadmium, zinc, nickel, sodium, lead and manganese ions. Completely inhibited by IAA (cysteine protease inhibitor), PMSF (serine protease inhibitor), DEP (histidine protease inhibitor) and NAI (tyrosine protease inhibitor). Inhibited by ethanol, acetone, SDS, and EDTA. Activity is strongly inhibited by mercury ions. Also inhibited by lithium, aluminum, calcium, barium and iron ions. In terms of biological role, lignin degradation and detoxification of lignin-derived products. Has activity towards 2,2'-azino-bis(3-ethylbenzothiazoline-6-sulfonic acid) (ABTS). This is Laccase-S from Trametes hirsuta (White-rot fungus).